The primary structure comprises 248 residues: 1-(5-phosphoribosyl)-5-[(5-phosphoribosylamino)methylideneamino] imidazole-4-carboxamide isomerase (248 aa).

D8 (proton acceptor) is an active-site residue. Residue D129 is the Proton donor of the active site.

This sequence belongs to the HisA/HisF family.

The protein localises to the cytoplasm. It carries out the reaction 1-(5-phospho-beta-D-ribosyl)-5-[(5-phospho-beta-D-ribosylamino)methylideneamino]imidazole-4-carboxamide = 5-[(5-phospho-1-deoxy-D-ribulos-1-ylimino)methylamino]-1-(5-phospho-beta-D-ribosyl)imidazole-4-carboxamide. It functions in the pathway amino-acid biosynthesis; L-histidine biosynthesis; L-histidine from 5-phospho-alpha-D-ribose 1-diphosphate: step 4/9. This chain is 1-(5-phosphoribosyl)-5-[(5-phosphoribosylamino)methylideneamino] imidazole-4-carboxamide isomerase, found in Rhizobium leguminosarum bv. trifolii (strain WSM2304).